A 289-amino-acid polypeptide reads, in one-letter code: Borealin (289 aa).

The interval 1–58 is required for interaction with INCENP; the sequence is MAPKKRSSRGTRTNTLRSRKLASFLKDFDREVQVRTKQIESDRQTLLKEVENLYNIEI. Residues 1-88 are required for centromere localization; that stretch reads MAPKKRSSRG…NKQALEEAAK (88 aa). A required for interaction with SENP3 region spans residues 1 to 150; sequence MAPKKRSSRG…KKSHKNLRSA (150 aa). The required to form a minimal CPC core complex that localizes to the central spindle and midbody and properly executes the role of the CPC during cytokinesis stretch occupies residues 10 to 109; that stretch reads GTRTNTLRSR…TAEAIQTPLK (100 aa). Residues 20–78 are required for interaction with INCENP and BIRC5; it reads KLASFLKDFDREVQVRTKQIESDRQTLLKEVENLYNIEILRLPKALQGMKWLDYFALGG. R91 carries the post-translational modification Citrulline. Phosphothreonine; by TTK is present on T94. T106 carries the phosphothreonine modification. S110 bears the Phosphoserine mark. A disordered region spans residues 122-173; it reads SIKEEEEEEEEGGGGGGRTKKSHKNLRSAKVKRCLPSKKRTQSIQGRGRSKR. Positions 123–133 are enriched in acidic residues; sequence IKEEEEEEEEG. Basic residues predominate over residues 139–162; sequence RTKKSHKNLRSAKVKRCLPSKKRT. K145 participates in a covalent cross-link: Glycyl lysine isopeptide (Lys-Gly) (interchain with G-Cter in SUMO2). S175 carries the phosphoserine modification. 2 positions are modified to phosphothreonine: T198 and T213. Phosphoserine occurs at positions 228, 233, 247, and 253.

It belongs to the borealin family. May form homooligomers and homodimers. Component of the chromosomal passenger complex (CPC) composed of at least BIRC5/survivin, CDCA8/borealin, INCENP, AURKB or AURKC; in the complex forms a triple-helix bundle-based subcomplex with INCENP and BIRC5. Interacts with SENP3, UBE2I and RANBP2. Interacts (phosphorylated) with SGO1 and SGO2A; the association is dependent on CDK1. Phosphorylated by TTK, essentially at Thr-94. Phosphorylation (probably by CDK1) promotes targeting of the CPC to centromeric DNA. In terms of processing, sumoylated by UBE2I and RANBP2. Desumoylated by SENP3 through the removal of SUMO2 and SUMO3. Post-translationally, citrullinated by PADI4.

It is found in the nucleus. It localises to the nucleolus. The protein localises to the cytoplasm. Its subcellular location is the chromosome. The protein resides in the centromere. It is found in the cytoskeleton. It localises to the spindle. Component of the chromosomal passenger complex (CPC), a complex that acts as a key regulator of mitosis. The CPC complex has essential functions at the centromere in ensuring correct chromosome alignment and segregation and is required for chromatin-induced microtubule stabilization and spindle assembly. In the complex, it may be required to direct the CPC to centromeric DNA. Major effector of the TTK kinase in the control of attachment-error-correction and chromosome alignment. The sequence is that of Borealin (Cdca8) from Mus musculus (Mouse).